The following is a 290-amino-acid chain: Lectin-related protein (290 aa).

An N-terminal signal peptide occupies residues 1 to 36; the sequence is ANSNSRPHLLQTQKPFSVVLAISITFYLLLLNKVNS. N-linked (GlcNAc...) asparagine glycans are attached at residues Asn119, Asn147, and Asn152. Glu161 and Asp163 together coordinate Mn(2+). The Ca(2+) site is built by Asp163, Asn167, and Asp170. Residues Asp170 and His175 each contribute to the Mn(2+) site.

This sequence belongs to the leguminous lectin family. Homotetramer.

Functionally, does not have any carbohydrate binding or agglutination activity. The protein is Lectin-related protein of Cladrastis kentukea (Yellow wood).